The primary structure comprises 227 residues: Ribosomal RNA large subunit methyltransferase E (227 aa).

5 residues coordinate S-adenosyl-L-methionine: glycine 78, tryptophan 80, aspartate 103, aspartate 119, and aspartate 143. Lysine 183 acts as the Proton acceptor in catalysis.

Belongs to the class I-like SAM-binding methyltransferase superfamily. RNA methyltransferase RlmE family.

The protein resides in the cytoplasm. It carries out the reaction uridine(2552) in 23S rRNA + S-adenosyl-L-methionine = 2'-O-methyluridine(2552) in 23S rRNA + S-adenosyl-L-homocysteine + H(+). Functionally, specifically methylates the uridine in position 2552 of 23S rRNA at the 2'-O position of the ribose in the fully assembled 50S ribosomal subunit. The polypeptide is Ribosomal RNA large subunit methyltransferase E (Rickettsia typhi (strain ATCC VR-144 / Wilmington)).